The primary structure comprises 266 residues: HLA class II histocompatibility antigen, DR beta 3 chain (266 aa).

The first 29 residues, 1–29, serve as a signal peptide directing secretion; it reads MVCLKLPGGSSLAALTVTLMVLSSRLAFA. A beta-1 region spans residues 30–124; sequence GDTRPRFLEL…GESFTVQRRV (95 aa). The Extracellular segment spans residues 30–227; that stretch reads GDTRPRFLEL…RARSESAQSK (198 aa). 2 cysteine pairs are disulfide-bonded: C44/C108 and C146/C202. Residue N48 is glycosylated (N-linked (GlcNAc...) asparagine). The beta-2 stretch occupies residues 125-227; that stretch reads HPQVTVYPAK…RARSESAQSK (103 aa). An Ig-like C1-type domain is found at 126-214; it reads PQVTVYPAKT…EHPSVTSALT (89 aa). Residues 228-248 form a helical membrane-spanning segment; that stretch reads MLSGVGGFVLGLLFLGAGLFI. Over 249-266 the chain is Cytoplasmic; sequence YFRNQKGHSGLQPTGFLS.

It belongs to the MHC class II family. As to quaternary structure, heterotrimer that consists of an alpha chain HLA-DRA, a beta chain HLA-DRB1 and a peptide (peptide-MHCII). Newly synthesized alpha and beta chains forms a heterodimer (MHCII) that associates with the CD74/invariant chain (Ii) in the endoplasmic reticulum (ER). Ii is a trimer composed of three subunits and each subunit interacts with one MHCII dimer, blocking the peptide-binding cleft. As a result, MHCII molecules cannot bind peptides present in the ER. The complex of MHCII and CD74/Ii is transported in vesicles from ER to Golgi to lysosomes, where it encounters antigenic peptides generated via proteolysis of endocytosed antigens. MHCII dimers are dissociated from CD74/Ii by the combined action of proteolysis and HLA-DM. Lysosomal enzymes such as cathepsin, degrade CD74/Ii leaving a 24 amino acid remnant called class II-associated Ii or CLIP. Interacts (via the peptide binding cleft) with CLIP; this interaction inhibits antigen peptide binding before entry in the endosomal compartment. The displacement of CLIP and replacement by a high affinity peptide in lysosomes is performed by HLA-DM heterodimer. HLA-DM catalyzes CLIP dissociation from MHCII, stabilizes empty MHCII and mediates the selection of high affinity peptides. Interacts with HLA-DM heterodimer; this interaction is direct. Interacts with TCR (via CDR3). Interacts (via beta-2 domain) with CD4 coreceptor (via Ig-like V-type domain); this interaction is of exceptionally low affinity yet necessary for optimal recognition of antigenic peptides. Ubiquitinated by MARCHF1 and MARCHF8 at Lys-254 leading to sorting into the endosome system and down-regulation of MHC class II. In terms of tissue distribution, expressed in professional APCs: monocyte/macrophages, dendritic cells and B cells (at protein level).

Its subcellular location is the cell membrane. The protein resides in the endoplasmic reticulum membrane. It is found in the lysosome membrane. The protein localises to the late endosome membrane. It localises to the autolysosome membrane. In terms of biological role, a beta chain of antigen-presenting major histocompatibility complex class II (MHCII) molecule. In complex with the alpha chain HLA-DRA, displays antigenic peptides on professional antigen presenting cells (APCs) for recognition by alpha-beta T cell receptor (TCR) on HLA-DRB3-restricted CD4-positive T cells. This guides antigen-specific T-helper effector functions, both antibody-mediated immune response and macrophage activation, to ultimately eliminate the infectious agents and transformed cells. Typically presents extracellular peptide antigens of 10 to 30 amino acids that arise from proteolysis of endocytosed antigens in lysosomes. In the tumor microenvironment, presents antigenic peptides that are primarily generated in tumor-resident APCs likely via phagocytosis of apoptotic tumor cells or macropinocytosis of secreted tumor proteins. Presents peptides derived from intracellular proteins that are trapped in autolysosomes after macroautophagy, a mechanism especially relevant for T cell selection in the thymus and central immune tolerance. The selection of the immunodominant epitopes follows two processing modes: 'bind first, cut/trim later' for pathogen-derived antigenic peptides and 'cut first, bind later' for autoantigens/self-peptides. The anchor residue at position 1 of the peptide N-terminus, usually a large hydrophobic residue, is essential for high affinity interaction with MHCII molecules. ALLELE DRB3*01:01: Exclusively presents several immunogenic epitopes derived from C.tetani neurotoxin tetX, playing a significant role in immune recognition and long-term protection. Presents viral epitopes derived from HHV-6B U11, TRX2/U56 and U85 antigens to polyfunctional CD4-positive T cells with cytotoxic activity implicated in control of HHV-6B infection. Its function is as follows. ALLELE DRB3*02:02 Exclusively presents several immunogenic epitopes derived from C.tetani neurotoxin tetX, playing a significant role in immune recognition and long-term protection. Upon EBV infection, presents to CD4-positive T cells latent antigen EBNA2 (PRSPTVFYNIPPMPLPPSQL) and lytic antigen BZLF1 (LTAYHVSTAPTGSWF) peptides, driving oligoclonal expansion and selection of virus-specific memory T cell subsets with cytotoxic potential to directly eliminate virus-infected B cells. Presents viral epitopes derived from HHV-6B U11, gB/U39 and gH/U48 antigens to polyfunctional CD4-positive T cells with cytotoxic activity implicated in control of HHV-6B infection. Plays a minor role in CD4-positive T cell immune response against Dengue virus by presenting conserved peptides from capsid and non-structural NS3 proteins. Displays peptides derived from IAV matrix protein M, implying a role in protection against IAV infection. In the context of tumor immunesurveillance, may present to T-helper 1 cells an immunogenic epitope derived from tumor-associated antigen WT1 (KRYFKLSHLQMHSRKH), likely providing for effective antitumor immunity in a wide range of solid and hematological malignancies. Presents to Vbeta2-positive T-helper 1 cells specifically an immunodominant peptide derived from tumor antigen CTAG1A/NY-ESO-1(PGVLLKEFTVSGNILTIRLTAADHR) and confers protective memory response. In metastatic epithelial tumors, presents to intratumoral CD4-positive T cells a TP53 neoantigen (HYNYMCNSSCMGSMNRRPILTIITL) carrying G245S hotspot driver mutation and may mediate tumor regression. Functionally, ALLELE DRB3*03:01: Presents a series of conserved peptides derived from the M.tuberculosis PPE family of proteins, in particular PPE29 and PPE33, known to be highly immunogenic. Presents immunogenic epitopes derived from C.tetani neurotoxin tetX, playing a role in immune recognition and long-term protection. Displays immunodominant viral peptides from HCV non-structural protein NS2, as part of a broad range T-helper response to resolve infection. The chain is HLA class II histocompatibility antigen, DR beta 3 chain (HLA-DRB3) from Homo sapiens (Human).